The sequence spans 392 residues: Probable protein phosphatase 2C 29 (392 aa).

The region spanning 44-353 is the PPM-type phosphatase domain; sequence DYSVAVAQAN…DDITVVVLFL (310 aa). 4 residues coordinate Mn(2+): Asp75, Gly76, Asp285, and Asp344. The disordered stretch occupies residues 360–392; that stretch reads AGRGDEIDGTDGPVDVFSLSPDDREDPTRPVLR.

It belongs to the PP2C family. Mg(2+) serves as cofactor. The cofactor is Mn(2+).

It carries out the reaction O-phospho-L-seryl-[protein] + H2O = L-seryl-[protein] + phosphate. The enzyme catalyses O-phospho-L-threonyl-[protein] + H2O = L-threonyl-[protein] + phosphate. The protein is Probable protein phosphatase 2C 29 of Oryza sativa subsp. japonica (Rice).